Reading from the N-terminus, the 275-residue chain is Ciliary microtubule inner protein 2B (275 aa).

Disordered regions lie at residues P62–E84 and E125–S169. 2 stretches are compositionally biased toward basic and acidic residues: residues E71–E84 and E125–V147.

Belongs to the CIMIP2 family. Microtubule inner protein component of sperm flagellar doublet microtubules. In terms of tissue distribution, expressed in airway epithelial cells.

The protein localises to the cytoplasm. It localises to the cytoskeleton. Its subcellular location is the cilium axoneme. The protein resides in the flagellum axoneme. In terms of biological role, microtubule inner protein (MIP) part of the dynein-decorated doublet microtubules (DMTs) in cilia axoneme, which is required for motile cilia beating. The polypeptide is Ciliary microtubule inner protein 2B (Homo sapiens (Human)).